Consider the following 1052-residue polypeptide: Eukaryotic translation initiation factor 3 subunit A (1052 aa).

Positions 92–121 (LKKFIELAEKKVTEAQAKADEIQSSLESAA) form a coiled coil. One can recognise a PCI domain in the interval 339 to 523 (MTKAASFVLL…GVLTFDTDVF (185 aa)). A coiled-coil region spans residues 580–906 (EARLQAKRAA…AEARRAARRT (327 aa)). Basic and acidic residues-rich tracts occupy residues 617–632 (AATD…EETR) and 794–901 (KEVS…EARR). 2 disordered regions span residues 617–646 (AATD…AEKQ) and 794–1052 (KEVS…QGGQ). 2 stretches are compositionally biased toward low complexity: residues 905 to 927 (RTGG…TAPR) and 948 to 964 (KEAA…AAPE). The segment covering 1013–1028 (GSSQPPSRTQTPGSSS) has biased composition (polar residues).

This sequence belongs to the eIF-3 subunit A family. In terms of assembly, component of the eukaryotic translation initiation factor 3 (eIF-3) complex.

The protein resides in the cytoplasm. Functionally, RNA-binding component of the eukaryotic translation initiation factor 3 (eIF-3) complex, which is involved in protein synthesis of a specialized repertoire of mRNAs and, together with other initiation factors, stimulates binding of mRNA and methionyl-tRNAi to the 40S ribosome. The eIF-3 complex specifically targets and initiates translation of a subset of mRNAs involved in cell proliferation. The polypeptide is Eukaryotic translation initiation factor 3 subunit A (tif32) (Aspergillus niger (strain ATCC MYA-4892 / CBS 513.88 / FGSC A1513)).